Reading from the N-terminus, the 268-residue chain is Hydroxyethylthiazole kinase (268 aa).

Methionine 47 contacts substrate. Residues arginine 122 and threonine 168 each contribute to the ATP site. Alanine 195 serves as a coordination point for substrate.

This sequence belongs to the Thz kinase family. Mg(2+) serves as cofactor.

It carries out the reaction 5-(2-hydroxyethyl)-4-methylthiazole + ATP = 4-methyl-5-(2-phosphooxyethyl)-thiazole + ADP + H(+). It functions in the pathway cofactor biosynthesis; thiamine diphosphate biosynthesis; 4-methyl-5-(2-phosphoethyl)-thiazole from 5-(2-hydroxyethyl)-4-methylthiazole: step 1/1. Its function is as follows. Catalyzes the phosphorylation of the hydroxyl group of 4-methyl-5-beta-hydroxyethylthiazole (THZ). The protein is Hydroxyethylthiazole kinase of Rhizobium rhizogenes (strain K84 / ATCC BAA-868) (Agrobacterium radiobacter).